Consider the following 248-residue polypeptide: 1-(5-phosphoribosyl)-5-[(5-phosphoribosylamino)methylideneamino] imidazole-4-carboxamide isomerase (248 aa).

Aspartate 8 acts as the Proton acceptor in catalysis. The active-site Proton donor is the aspartate 129.

Belongs to the HisA/HisF family.

The protein resides in the cytoplasm. The enzyme catalyses 1-(5-phospho-beta-D-ribosyl)-5-[(5-phospho-beta-D-ribosylamino)methylideneamino]imidazole-4-carboxamide = 5-[(5-phospho-1-deoxy-D-ribulos-1-ylimino)methylamino]-1-(5-phospho-beta-D-ribosyl)imidazole-4-carboxamide. It functions in the pathway amino-acid biosynthesis; L-histidine biosynthesis; L-histidine from 5-phospho-alpha-D-ribose 1-diphosphate: step 4/9. This Sinorhizobium medicae (strain WSM419) (Ensifer medicae) protein is 1-(5-phosphoribosyl)-5-[(5-phosphoribosylamino)methylideneamino] imidazole-4-carboxamide isomerase.